Reading from the N-terminus, the 284-residue chain is D-tagatose-1,6-bisphosphate aldolase subunit GatY (284 aa).

D82 serves as the catalytic Proton donor. Residues H83 and H180 each coordinate Zn(2+). G181 serves as a coordination point for dihydroxyacetone phosphate. H208 contributes to the Zn(2+) binding site. Dihydroxyacetone phosphate-binding positions include 209-211 and 230-233; these read GAS and NVAT.

Belongs to the class II fructose-bisphosphate aldolase family. TagBP aldolase GatY subfamily. In terms of assembly, forms a complex with GatZ. It depends on Zn(2+) as a cofactor.

It carries out the reaction D-tagatofuranose 1,6-bisphosphate = D-glyceraldehyde 3-phosphate + dihydroxyacetone phosphate. Its pathway is carbohydrate metabolism; D-tagatose 6-phosphate degradation; D-glyceraldehyde 3-phosphate and glycerone phosphate from D-tagatose 6-phosphate: step 2/2. Catalytic subunit of the tagatose-1,6-bisphosphate aldolase GatYZ, which catalyzes the reversible aldol condensation of dihydroxyacetone phosphate (DHAP or glycerone-phosphate) with glyceraldehyde 3-phosphate (G3P) to produce tagatose 1,6-bisphosphate (TBP). Requires GatZ subunit for full activity and stability. Is involved in the catabolism of galactitol. The polypeptide is D-tagatose-1,6-bisphosphate aldolase subunit GatY (Shigella dysenteriae serotype 1 (strain Sd197)).